A 336-amino-acid polypeptide reads, in one-letter code: 3-isopropylmalate dehydrogenase (336 aa).

Substrate contacts are provided by R87, R97, R121, and D211. 3 residues coordinate Mg(2+): D211, D235, and D239. 271 to 283 provides a ligand contact to NAD(+); sequence GSAPDIAGQGIAD.

This sequence belongs to the isocitrate and isopropylmalate dehydrogenases family. LeuB type 2 subfamily. Homodimer. It depends on Mg(2+) as a cofactor. Mn(2+) is required as a cofactor.

The protein localises to the cytoplasm. The catalysed reaction is (2R,3S)-3-isopropylmalate + NAD(+) = 4-methyl-2-oxopentanoate + CO2 + NADH. The protein operates within amino-acid biosynthesis; L-leucine biosynthesis; L-leucine from 3-methyl-2-oxobutanoate: step 3/4. Catalyzes the oxidation of 3-carboxy-2-hydroxy-4-methylpentanoate (3-isopropylmalate) to 3-carboxy-4-methyl-2-oxopentanoate. The product decarboxylates to 4-methyl-2 oxopentanoate. The sequence is that of 3-isopropylmalate dehydrogenase from Rhodococcus opacus (strain B4).